A 357-amino-acid polypeptide reads, in one-letter code: Acyl-coenzyme A diphosphatase NUDT19 (357 aa).

Positions 10–242 constitute a Nudix hydrolase domain; it reads AATVMLAAGW…IWLAPPQFYE (233 aa). Positions 72–93 are disordered; the sequence is PRFGLGPEPPRQPPFPGLSHGD. Residues 78–87 show a composition bias toward pro residues; it reads PEPPRQPPFP. A Nudix box motif is present at residues 97–118; it reads AALPDDVALRICAIREAFEEAG. Mg(2+) is bound by residues E112 and E116. K300 carries the N6-succinyllysine modification. The Microbody targeting signal motif lies at 355-357; it reads AHL.

This sequence belongs to the Nudix hydrolase family. Monomer. Requires Mg(2+) as cofactor. Mn(2+) serves as cofactor. Highly expressed in the kidneys, with lower levels in skeletal muscle and brain (at protein level).

It localises to the peroxisome. The enzyme catalyses an acyl-CoA + H2O = an acyl-4'-phosphopantetheine + adenosine 3',5'-bisphosphate + 2 H(+). It catalyses the reaction CoA + H2O = (R)-4'-phosphopantetheine + adenosine 3',5'-bisphosphate + 2 H(+). It carries out the reaction hexanoyl-CoA + H2O = hexanoyl-4'-phosphopantetheine + adenosine 3',5'-bisphosphate + 2 H(+). The catalysed reaction is octanoyl-CoA + H2O = S-octanoyl-4'-phosphopantetheine + adenosine 3',5'-bisphosphate + 2 H(+). The enzyme catalyses butanoyl-CoA + H2O = S-butanoyl-4'-phosphopantetheine + adenosine 3',5'-bisphosphate + 2 H(+). It catalyses the reaction propanoyl-CoA + H2O = propanoyl-4'-phosphopantetheine + adenosine 3',5'-bisphosphate + 2 H(+). It carries out the reaction malonyl-CoA + H2O = malonyl-4'-phosphopantetheine + adenosine 3',5'-bisphosphate + 2 H(+). The catalysed reaction is succinyl-CoA + H2O = succinyl-4'-phosphopantetheine + adenosine 3',5'-bisphosphate + 2 H(+). The enzyme catalyses choloyl-CoA + H2O = S-choloyl-4'-phosphopantetheine + adenosine 3',5'-bisphosphate + 2 H(+). It catalyses the reaction 4,8-dimethylnonanoyl-CoA + H2O = S-(4,8-dimethylnonanoyl)-4'-phosphopantetheine + adenosine 3',5'-bisphosphate + 2 H(+). It carries out the reaction (9Z,12Z,15Z)-octadecatrienoyl-CoA + H2O = S-(9Z,12Z,15Z-octadecatrienoyl)-4'-phosphopantetheine + adenosine 3',5'-bisphosphate + 2 H(+). The catalysed reaction is (9Z,12Z)-octadecadienoyl-CoA + H2O = S-(9Z,12Z-octadecadienoyl)-4'-phosphopantetheine + adenosine 3',5'-bisphosphate + 2 H(+). The enzyme catalyses (9Z)-hexadecenoyl-CoA + H2O = S-(9Z-hexadecenoyl)-4'-phosphopantetheine + adenosine 3',5'-bisphosphate + 2 H(+). It catalyses the reaction (9Z)-tetradecenoyl-CoA + H2O = S-(9Z-tetradecenoyl)-4'-phosphopantetheine + adenosine 3',5'-bisphosphate + 2 H(+). It carries out the reaction (6Z)-octenoyl-CoA + H2O = S-(6Z-octenoyl)-4'-phosphopantetheine + adenosine 3',5'-bisphosphate + 2 H(+). The catalysed reaction is hexadecanoyl-CoA + H2O = S-hexadecanoyl-4'-phosphopantetheine + adenosine 3',5'-bisphosphate + 2 H(+). The enzyme catalyses tetradecanoyl-CoA + H2O = tetradecanoyl-4'-phosphopantetheine + adenosine 3',5'-bisphosphate + 2 H(+). It catalyses the reaction dodecanoyl-CoA + H2O = S-dodecanoyl-4'-phosphopantetheine + adenosine 3',5'-bisphosphate + 2 H(+). It carries out the reaction a 5'-end CoA-ribonucleoside in mRNA + H2O = a 5'-end phospho-adenosine-phospho-ribonucleoside in mRNA + (R)-4'-phosphopantetheine + 2 H(+). Its activity is regulated as follows. Inhibited by chenodeoxycholic acid (CDCA) and its conjugated derivatives, taurochenodeoxycholic acid and glycochenodeoxycholic acid. Inhibited by fluoride. Its function is as follows. Fatty acyl-coenzyme A (CoA) diphosphatase that hydrolyzes fatty acyl-CoA to yield acyl-4'-phosphopantetheine and adenosine 3',5'-bisphosphate. Mediates the hydrolysis of a wide range of CoA esters, including choloyl-CoA and branched-chain fatty-acyl-CoA esters and at low substrate concentrations medium and long-chain fatty-acyl-CoA esters are the primary substrates. Highest activity seen with medium-chain acyl-CoA esters and higher rates of activity seen with the unsaturated acyl-CoA esters compared with the saturated esters. Exhibits decapping activity towards dpCoA-capped RNAs in vitro. The protein is Acyl-coenzyme A diphosphatase NUDT19 (Nudt19) of Mus musculus (Mouse).